The following is a 713-amino-acid chain: Polyribonucleotide nucleotidyltransferase (713 aa).

Asp-491 and Asp-497 together coordinate Mg(2+). The KH domain maps to 558-617 (PRMITIKINPEKIRDVIGKGGSVIRALTEETGTTIDISDDGVVTIASTSSDGMAEAKKRI). The 69-residue stretch at 627-695 (GQVYEGTVLK…EKGRVRLSAK (69 aa)) folds into the S1 motif domain.

The protein belongs to the polyribonucleotide nucleotidyltransferase family. Mg(2+) is required as a cofactor.

The protein localises to the cytoplasm. It carries out the reaction RNA(n+1) + phosphate = RNA(n) + a ribonucleoside 5'-diphosphate. Functionally, involved in mRNA degradation. Catalyzes the phosphorolysis of single-stranded polyribonucleotides processively in the 3'- to 5'-direction. The protein is Polyribonucleotide nucleotidyltransferase of Burkholderia cenocepacia (strain ATCC BAA-245 / DSM 16553 / LMG 16656 / NCTC 13227 / J2315 / CF5610) (Burkholderia cepacia (strain J2315)).